Consider the following 1125-residue polypeptide: Exportin-6 (1125 aa).

Ala2 carries the N-acetylalanine modification. Residues 31–97 (IEELLNNFAQ…RSCLPKLLLA (67 aa)) form the Importin N-terminal domain. Ser199 carries the phosphoserine modification. Thr201 and Thr204 each carry phosphothreonine. A phosphoserine mark is found at Ser208 and Ser224.

It belongs to the exportin family. As to quaternary structure, found in a complex with XPO6, Ran, ACTB and PFN1. Interacts with ACTB. Interacts with ACTB in a RanGTP-dependent manner.

Its subcellular location is the nucleus. The protein resides in the cytoplasm. Functionally, mediates the nuclear export of actin and profilin-actin complexes in somatic cells. The polypeptide is Exportin-6 (Xpo6) (Mus musculus (Mouse)).